Reading from the N-terminus, the 256-residue chain is 5-oxoprolinase subunit A (256 aa).

Belongs to the LamB/PxpA family. Forms a complex composed of PxpA, PxpB and PxpC.

It carries out the reaction 5-oxo-L-proline + ATP + 2 H2O = L-glutamate + ADP + phosphate + H(+). Catalyzes the cleavage of 5-oxoproline to form L-glutamate coupled to the hydrolysis of ATP to ADP and inorganic phosphate. The sequence is that of 5-oxoprolinase subunit A from Cutibacterium acnes (strain DSM 16379 / KPA171202) (Propionibacterium acnes).